The following is a 231-amino-acid chain: Ion-translocating oxidoreductase complex subunit E (231 aa).

6 helical membrane-spanning segments follow: residues 18–38 (ALVQ…ATNA), 39–59 (LGLG…ISTL), 63–83 (TPAE…VSAV), 86–106 (LINA…PLIV), 125–145 (ALSA…MFVL), and 182–202 (PFLL…MLAG).

It belongs to the NqrDE/RnfAE family. The complex is composed of six subunits: RsxA, RsxB, RsxC, RsxD, RsxE and RsxG.

Its subcellular location is the cell inner membrane. In terms of biological role, part of a membrane-bound complex that couples electron transfer with translocation of ions across the membrane. Required to maintain the reduced state of SoxR. The protein is Ion-translocating oxidoreductase complex subunit E of Escherichia coli O6:H1 (strain CFT073 / ATCC 700928 / UPEC).